A 401-amino-acid chain; its full sequence is Mu-type opioid receptor (401 aa).

Residues 1–69 (MDSSADPRNA…CPPTGSPSMV (69 aa)) are Extracellular-facing. N9, N12, N34, N41, and N49 each carry an N-linked (GlcNAc...) asparagine glycan. The chain crosses the membrane as a helical span at residues 70 to 94 (TAITIMALYSIVCVVGLFGNFLVMY). Topologically, residues 95 to 107 (VIVRYTKMKTATN) are cytoplasmic. The chain crosses the membrane as a helical span at residues 108–132 (IYIFNLALADALATSTLPFQSVNYL). Topologically, residues 133–143 (MGTWPFGTILC) are extracellular. A disulfide bridge links C143 with C220. The chain crosses the membrane as a helical span at residues 144–166 (KIVISIDYYNMFTSIFTLCTMSV). The Cytoplasmic portion of the chain corresponds to 167 to 186 (DRYIAVCHPVKALDFRTPRN). A Phosphotyrosine modification is found at Y169. A helical transmembrane segment spans residues 187–208 (AKIINVCNWILSSAIGLPVMFM). At 209–231 (ATTKYRNGSIDCALTFSHPTWYW) the chain is on the extracellular side. A helical membrane pass occupies residues 232–256 (ENLLKICVFIFAFIMPVLIITVCYG). At 257 to 280 (LMILRLKSVRMLSGSKEKDRNLRR) the chain is on the cytoplasmic side. A helical transmembrane segment spans residues 281-307 (ITRMVLVVVAVFIVCWTPIHIYVIIKA). Topologically, residues 308 to 315 (LITIPETT) are extracellular. Residues 316–339 (FQTVSWHFCIALGYTNSCLNPVLY) form a helical membrane-spanning segment. The NPxxY; plays a role in stabilizing the activated conformation of the receptor motif lies at 335–339 (NPVLY). At 340–401 (AFLDENFKRC…NLEAETAPLP (62 aa)) the chain is on the cytoplasmic side. C354 carries the S-palmitoyl cysteine lipid modification. Residues 365–385 (NSARIRQNTRDHPSTANTVDR) form a disordered region. Position 366 is a phosphoserine (S366). T373 carries the phosphothreonine modification. S378 is modified (phosphoserine). The residue at position 397 (T397) is a Phosphothreonine.

It belongs to the G-protein coupled receptor 1 family. In terms of assembly, forms homooligomers and heterooligomers with other GPCRs, such as OPRD1, OPRK1, OPRL1, NPFFR2, ADRA2A, SSTR2, CNR1 and CCR5 (probably in dimeric forms). Interacts with heterotrimeric G proteins; interaction with a heterotrimeric complex containing GNAI1, GNB1 and GNG2 stabilizes the active conformation of the receptor and increases its affinity for endomorphin-2, the synthetic opioid peptide DAMGO and for morphinan agonists. Interacts with PPL; the interaction disrupts agonist-mediated G-protein activation. Interacts (via C-terminus) with DNAJB4 (via C-terminus). Interacts with calmodulin; the interaction inhibits the constitutive activity of OPRM1; it abolishes basal and attenuates agonist-stimulated G-protein coupling. Interacts with FLNA, PLD2, RANBP9 and WLS and GPM6A. Interacts with RTP4. Interacts with SYP and GNAS. Interacts with RGS9, RGS17, RGS20, RGS4, PPP1R9B and HINT1. Post-translationally, phosphorylated. Differentially phosphorylated in basal and agonist-induced conditions. Agonist-mediated phosphorylation modulates receptor internalization. Phosphorylated by GRK2 in a agonist-dependent manner. Phosphorylation at Tyr-169 requires receptor activation, is dependent on non-receptor protein tyrosine kinase Src and results in a decrease in agonist efficacy by reducing G-protein coupling efficiency. Phosphorylated on tyrosine residues; the phosphorylation is involved in agonist-induced G-protein-independent receptor down-regulation. Phosphorylation at Ser-378 is involved in G-protein-dependent but not beta-arrestin-dependent activation of the ERK pathway. In terms of processing, ubiquitinated. A basal ubiquitination seems not to be related to degradation. Ubiquitination is increased upon formation of OPRM1:OPRD1 oligomers leading to proteasomal degradation; the ubiquitination is diminished by RTP4.

It localises to the cell membrane. Its subcellular location is the cell projection. The protein resides in the axon. The protein localises to the perikaryon. It is found in the dendrite. It localises to the endosome. In terms of biological role, receptor for endogenous opioids such as beta-endorphin and endomorphin. Receptor for natural and synthetic opioids including morphine, heroin, DAMGO, fentanyl, etorphine, buprenorphin and methadone. Also activated by enkephalin peptides, such as Met-enkephalin or Met-enkephalin-Arg-Phe, with higher affinity for Met-enkephalin-Arg-Phe. Agonist binding to the receptor induces coupling to an inactive GDP-bound heterotrimeric G-protein complex and subsequent exchange of GDP for GTP in the G-protein alpha subunit leading to dissociation of the G-protein complex with the free GTP-bound G-protein alpha and the G-protein beta-gamma dimer activating downstream cellular effectors. The agonist- and cell type-specific activity is predominantly coupled to pertussis toxin-sensitive G(i) and G(o) G alpha proteins, GNAI1, GNAI2, GNAI3 and GNAO1, and to a lesser extent to pertussis toxin-insensitive G alpha proteins GNAZ and GNA15. They mediate an array of downstream cellular responses, including inhibition of adenylate cyclase activity and both N-type and L-type calcium channels, activation of inward rectifying potassium channels, mitogen-activated protein kinase (MAPK), phospholipase C (PLC), phosphoinositide/protein kinase (PKC), phosphoinositide 3-kinase (PI3K) and regulation of NF-kappa-B. Also couples to adenylate cyclase stimulatory G alpha proteins. The selective temporal coupling to G-proteins and subsequent signaling can be regulated by RGSZ proteins, such as RGS9, RGS17 and RGS4. Phosphorylation by members of the GPRK subfamily of Ser/Thr protein kinases and association with beta-arrestins is involved in short-term receptor desensitization. Beta-arrestins associate with the GPRK-phosphorylated receptor and uncouple it from the G-protein thus terminating signal transduction. The phosphorylated receptor is internalized through endocytosis via clathrin-coated pits which involves beta-arrestins. The activation of the ERK pathway occurs either in a G-protein-dependent or a beta-arrestin-dependent manner and is regulated by agonist-specific receptor phosphorylation. Acts as a class A G-protein coupled receptor (GPCR) which dissociates from beta-arrestin at or near the plasma membrane and undergoes rapid recycling. Receptor down-regulation pathways are varying with the agonist and occur dependent or independent of G-protein coupling. Endogenous ligands induce rapid desensitization, endocytosis and recycling. Heterooligomerization with other GPCRs can modulate agonist binding, signaling and trafficking properties. Involved in neurogenesis. The chain is Mu-type opioid receptor (OPRM1) from Sus scrofa (Pig).